Reading from the N-terminus, the 284-residue chain is Nucleotide-binding protein VF_0384 (284 aa).

8-15 (GSSGAGKS) contributes to the ATP binding site. 56–59 (DIRN) is a GTP binding site.

Belongs to the RapZ-like family.

Displays ATPase and GTPase activities. This chain is Nucleotide-binding protein VF_0384, found in Aliivibrio fischeri (strain ATCC 700601 / ES114) (Vibrio fischeri).